The chain runs to 121 residues: Parathyroid hormone-related protein (121 aa).

The N-terminal stretch at 1–14 (VGVFLLSYSVPSCG) is a signal peptide. The propeptide occupies 15–24 (RSVEELGRRL). The tract at residues 47-58 (RFFLHHLIAEIH) is important for receptor binding. The interval 61–121 (EIRATSEVSP…PGKKKKGKPG (61 aa)) is disordered. A compositionally biased stretch (polar residues) spans 66 to 80 (SEVSPNSKPAPNTKN). The Nuclear localization signal signature appears at 98-119 (TNKVETYKEQPLKTPGKKKKGK). Over residues 99–108 (NKVETYKEQP) the composition is skewed to basic and acidic residues. A compositionally biased stretch (basic residues) spans 112 to 121 (PGKKKKGKPG).

This sequence belongs to the parathyroid hormone family. PTHrP interacts with PTH1R (via N-terminal extracellular domain).

Its subcellular location is the secreted. It localises to the cytoplasm. The protein resides in the nucleus. Neuroendocrine peptide which is a critical regulator of cellular and organ growth, development, migration, differentiation and survival and of epithelial calcium ion transport. Acts by binding to its receptor, PTH1R, activating G protein-coupled receptor signaling. Regulates endochondral bone development and epithelial-mesenchymal interactions during the formation of the mammary glands and teeth. Required for skeletal homeostasis. Promotes mammary mesenchyme differentiation and bud outgrowth by modulating mesenchymal cell responsiveness to BMPs. Up-regulates BMPR1A expression in the mammary mesenchyme and this increases the sensitivity of these cells to BMPs and allows them to respond to BMP4 in a paracrine and/or autocrine fashion. BMP4 signaling in the mesenchyme, in turn, triggers epithelial outgrowth and augments MSX2 expression, which causes the mammary mesenchyme to inhibit hair follicle formation within the nipple sheath. This chain is Parathyroid hormone-related protein (PTHLH), found in Ovis aries (Sheep).